The chain runs to 283 residues: Protein BASIC PENTACYSTEINE5 (283 aa).

The alanine-zipper stretch occupies residues 51-86 (AVKERNEAVAATKEALASRDEALEQRDKALSERDNA). Positions 63-89 (KEALASRDEALEQRDKALSERDNAIME) form a coiled coil. Residues 122-176 (EESHLPNPSPISTIPPEAANTRPTKRKKESKQGKKMGEDLNRPVASPGKKSRKDW) form a disordered region. Positions 151-162 (SKQGKKMGEDLN) are enriched in basic and acidic residues.

Belongs to the BBR/BPC family. As to quaternary structure, homodimer. Heterodimer. As to expression, expressed in seedlings, leaves and pistils.

It is found in the nucleus. Transcriptional regulator that specifically binds to GA-rich elements (GAGA-repeats) present in regulatory sequences of genes involved in developmental processes. This Arabidopsis thaliana (Mouse-ear cress) protein is Protein BASIC PENTACYSTEINE5 (BPC5).